The sequence spans 477 residues: MFRLNTLSALAELAVGSRWYHGASQPTQTKRRLMLVAFLGASAVTASTGLLWKKAHAESPPCVNSKKPDTEDKERNKDSGEVSSREGRAADAAAEPYPEDKKKKRSGFRDRKVMEYENRIRAYSTPDKIFRYFATLKVINEPGETEVFMTPQDFVRSITPNEKQPEHLGLDQYIIKRFDGKKIAQEREKFADEGSIFYSLGECGLISFSDYIFLTTVLSTPQRNFEIAFKMFDLNGDGEVDMEEFEQVQSIIRSQTSMGMRHRDRPTTGNTLKSGLCSALTTYFFGADLKGKLTIKNFLEFQRKLQHDVLKLEFERHDPVDGRISERQFGGMLLAYSGVQSKKLTAMQRQLKKHFKDGKGLTFQEVENFFTFLKNINDVDTALSFYHMAGASLDKVTMQQVARTVAKVELSDHVCDVVFALFDCDGNGELSNKEFVSIMKQRLMRGLEKPKDMGFTRLMQAMWKCAQETAWDFALPK.

Residues 1-33 constitute a mitochondrion transit peptide; sequence MFRLNTLSALAELAVGSRWYHGASQPTQTKRRL. Residues 57–107 form a disordered region; that stretch reads AESPPCVNSKKPDTEDKERNKDSGEVSSREGRAADAAAEPYPEDKKKKRSG. The segment covering 66 to 89 has biased composition (basic and acidic residues); the sequence is KKPDTEDKERNKDSGEVSSREGRA. Residues 101–112 form a polybasic region region; the sequence is KKKKRSGFRDRK. At serine 124 the chain carries Phosphoserine; by PKB. The k/R-ring stretch occupies residues 128–131; the sequence is KIFR. Residues 220-255 form the EF-hand 1 domain; it reads TPQRNFEIAFKMFDLNGDGEVDMEEFEQVQSIIRSQ. The Ca(2+) site is built by aspartate 233, asparagine 235, aspartate 237, glutamate 239, and glutamate 244. Residues 261–265 form a k/R-ring region; it reads RHRDR. Residues 356–376 form the EF-hand 2; degenerate domain; it reads KDGKGLTFQEVENFFTFLKNI. One can recognise an EF-hand 3 domain in the interval 410 to 445; the sequence is LSDHVCDVVFALFDCDGNGELSNKEFVSIMKQRLMR. Aspartate 423, aspartate 425, asparagine 427, glutamate 429, and glutamate 434 together coordinate Ca(2+). Position 457 is an asymmetric dimethylarginine (arginine 457). The interval 457 to 467 is C-helix region; that stretch reads RLMQAMWKCAQ.

The protein belongs to the MICU1 family. MICU1 subfamily. As to quaternary structure, heterodimer; disulfide-linked; heterodimerizes with MICU2 or MICU3. Homodimer; disulfide-linked. Component of the uniplex complex, composed of MCU, EMRE/SMDT1, MICU1 and MICU2 (or MICU3) in a 4:4:1:1 stoichiometry. The composition of calcium sensors within the uniplex complex can differ depending on tissues: a MICU1 homodimer can be present instead of the MICU1-MICU2 heterodimer in skeletal-muscle and kidney. MICU1 is recruited to the uniplex complex by EMRE/SMDT1, and it associates with MCU at low calcium levels, occluding the pore of the MCU channel. Associates with the MICOS complex. Interacts with SLC25A23. Interacts with CHCHD4/MIA40; which introduces the interchain disulfide bond with MICU2. Interacts (when methylated) with UCP2; leading to decrease the calcium sensitivity of MICU1. Heterodimer; disulfide-linked; heterodimerizes with MICU2 or MICU3. Heterodimerizes with MICU3 in skeletal muscle. Component of the uniplex complex, composed of MCU, EMRE/SMDT1, MICU1 and MICU2 (or MICU3) in a 4:4:1:1 stoichiometry. Also localizes to mitochondrial cristae junctions. Post-translationally, phosphorylation at Ser-124 by AKT1 impairs its maturation and stability. Asymmetric dimethylation at Arg-457 by PRMT1 decreases the calcium sensitivity of MICU1 by promoting interaction with UCP2. In terms of processing, degraded by YME1L1 when not complexed as homodimer or heterodimer. Not degraded when complexed as homodimer or heterodimer; the presence of the interchain disulfide bond protecting MICU1 from degradation by YME1L1. As to expression, expressed in skeletal muscle, heart, kidney, liver, brain, lung, fat and spleen. In terms of tissue distribution, specifically expressed in the skeletal muscle.

The protein resides in the mitochondrion intermembrane space. Its subcellular location is the mitochondrion inner membrane. Calcium sensor of the mitochondrial calcium uniporter (MCU) channel, which senses calcium level via its EF-hand domains. MICU1 and MICU2 (or MICU3) form a disulfide-linked heterodimer that stimulates and inhibits MCU activity, depending on the concentration of calcium. At low calcium levels, MICU1 occludes the pore of the MCU channel, preventing mitochondrial calcium uptake. At higher calcium levels, calcium-binding to MICU1 and MICU2 (or MICU3) induces a conformational change that weakens MCU-MICU1 interactions and moves the MICU1-MICU2 heterodimer away from the pore, allowing calcium permeation through the MCU channel. Also required to protect against manganese toxicity by preventing manganese uptake by MCU: mechanistically, manganese-binding to its EF-hand domains does not induce any conformational change, maintaining MCU pore occlusion. Acts as a regulator of mitochondrial cristae structure independently of its ability to regulate the mitochondrial calcium uniporter channel. Regulates glucose-dependent insulin secretion in pancreatic beta-cells by regulating mitochondrial calcium uptake. Induces T-helper 1-mediated autoreactivity, which is accompanied by the release of IFNG. Functionally, isoform that regulates mitochondrial calcium uniporter (MCU) in the skeletal muscle. Compared to other isoforms, this isoform has higher affinity for calcium, promoting mitochondrial calcium uptake at lower calcium concentrations. This allows a rapid response of mitochondrial metabolism and ensures sustained ATP production needed for resistance and strenuous exercise. The chain is Calcium uptake protein 1, mitochondrial from Mus musculus (Mouse).